The chain runs to 549 residues: Glucose-6-phosphate isomerase (549 aa).

Glu-355 acts as the Proton donor in catalysis. Residues His-387 and Lys-515 contribute to the active site.

This sequence belongs to the GPI family.

It localises to the cytoplasm. It catalyses the reaction alpha-D-glucose 6-phosphate = beta-D-fructose 6-phosphate. It participates in carbohydrate biosynthesis; gluconeogenesis. Its pathway is carbohydrate degradation; glycolysis; D-glyceraldehyde 3-phosphate and glycerone phosphate from D-glucose: step 2/4. Catalyzes the reversible isomerization of glucose-6-phosphate to fructose-6-phosphate. The chain is Glucose-6-phosphate isomerase from Haemophilus influenzae (strain 86-028NP).